The primary structure comprises 341 residues: Anthranilate phosphoribosyltransferase (341 aa).

5-phospho-alpha-D-ribose 1-diphosphate contacts are provided by residues G79, 82 to 83, T87, 89 to 92, 107 to 115, and S119; these read GD, NIST, and KHGNRAVSS. G79 provides a ligand contact to anthranilate. Mg(2+) is bound at residue S91. Residue N110 participates in anthranilate binding. R165 lines the anthranilate pocket. Mg(2+) contacts are provided by D224 and E225.

The protein belongs to the anthranilate phosphoribosyltransferase family. As to quaternary structure, homodimer. It depends on Mg(2+) as a cofactor.

The enzyme catalyses N-(5-phospho-beta-D-ribosyl)anthranilate + diphosphate = 5-phospho-alpha-D-ribose 1-diphosphate + anthranilate. It functions in the pathway amino-acid biosynthesis; L-tryptophan biosynthesis; L-tryptophan from chorismate: step 2/5. In terms of biological role, catalyzes the transfer of the phosphoribosyl group of 5-phosphorylribose-1-pyrophosphate (PRPP) to anthranilate to yield N-(5'-phosphoribosyl)-anthranilate (PRA). In Bacillus mycoides (strain KBAB4) (Bacillus weihenstephanensis), this protein is Anthranilate phosphoribosyltransferase.